A 378-amino-acid polypeptide reads, in one-letter code: Ribosomal RNA large subunit methyltransferase G (378 aa).

It belongs to the methyltransferase superfamily. RlmG family.

It localises to the cytoplasm. The enzyme catalyses guanosine(1835) in 23S rRNA + S-adenosyl-L-methionine = N(2)-methylguanosine(1835) in 23S rRNA + S-adenosyl-L-homocysteine + H(+). Its function is as follows. Specifically methylates the guanine in position 1835 (m2G1835) of 23S rRNA. The chain is Ribosomal RNA large subunit methyltransferase G from Escherichia coli O139:H28 (strain E24377A / ETEC).